A 60-amino-acid chain; its full sequence is L-amino-acid oxidase (60 aa).

1–4 (GPMR) provides a ligand contact to FAD. Arginine 4 provides a ligand contact to substrate.

This sequence belongs to the flavin monoamine oxidase family. FIG1 subfamily. Homodimer; non-covalently linked. FAD serves as cofactor. In terms of processing, contains 2 disulfide bonds. N-glycosylated. Expressed by the venom gland.

It localises to the secreted. It catalyses the reaction an L-alpha-amino acid + O2 + H2O = a 2-oxocarboxylate + H2O2 + NH4(+). In terms of biological role, catalyzes an oxidative deamination of predominantly hydrophobic and aromatic L-amino acids, thus producing hydrogen peroxide that may contribute to the diverse toxic effects of this enzyme. Exhibits diverse biological activities, such as hemorrhage, hemolysis, edema, apoptosis of vascular endothelial cells or tumor cell lines, antibacterial and antiparasitic activities, as well as regulation of platelet aggregation. Effects of snake L-amino oxidases on platelets are controversial, since they either induce aggregation or inhibit agonist-induced aggregation. These different effects are probably due to different experimental conditions. In Bitis gabonica (Gaboon adder), this protein is L-amino-acid oxidase.